Here is a 367-residue protein sequence, read N- to C-terminus: Otolith matrix protein 1 (367 aa).

The first 23 residues, 1 to 23 (MDRLDRRLAATLLLFSFISFSTQ), serve as a signal peptide directing secretion. Positions 27-363 (ISWCVVSEAE…YTTVLQAFEC (337 aa)) constitute a Transferrin-like domain.

The protein belongs to the transferrin family. In terms of assembly, interacts with OTOL1. In terms of tissue distribution, expressed in the sacculus during the day.

The protein localises to the secreted. Its function is as follows. Required for normal otolith growth and deposition of otolin-1 in the otolith. The polypeptide is Otolith matrix protein 1 (otomp) (Oncorhynchus mykiss (Rainbow trout)).